Reading from the N-terminus, the 252-residue chain is Serine/threonine phosphatase stp (252 aa).

Positions 1 to 18 (MHAEFRTDRGRIRHHNED) are enriched in basic and acidic residues. The tract at residues 1–23 (MHAEFRTDRGRIRHHNEDNGGVF) is disordered. The 241-residue stretch at 2–242 (HAEFRTDRGR…DNITVLLVER (241 aa)) folds into the PPM-type phosphatase domain. The Mn(2+) site is built by aspartate 36, glycine 37, aspartate 194, and aspartate 233.

Belongs to the PP2C family. Mn(2+) is required as a cofactor.

It is found in the cytoplasm. The protein resides in the membrane. It carries out the reaction O-phospho-L-seryl-[protein] + H2O = L-seryl-[protein] + phosphate. The catalysed reaction is O-phospho-L-threonyl-[protein] + H2O = L-threonyl-[protein] + phosphate. Protein phosphatase that dephosphorylates EF-Tu. The polypeptide is Serine/threonine phosphatase stp (stp) (Listeria welshimeri serovar 6b (strain ATCC 35897 / DSM 20650 / CCUG 15529 / CIP 8149 / NCTC 11857 / SLCC 5334 / V8)).